We begin with the raw amino-acid sequence, 25 residues long: Plasticin-L1 (25 aa).

Belongs to the frog skin active peptide (FSAP) family. Plasticin subfamily. In terms of tissue distribution, expressed by the skin glands.

Its subcellular location is the secreted. It localises to the target cell membrane. Functionally, may play an immunomodulatory role in frog skin in response to microbial pathogens, since it increases the production of the pro-inflammatory cytokines TNF-alpha, IL-1 beta, IL-12, and IL-23 by mouse peritoneal macrophages and has no effect on the production of the anti-inflammatory cytokine IL-10. It is not known whether stimulation of cytokine production arises from a non-specific interaction of the peptide with the macrophage membrane or from interaction with a specific receptor. Shows a low activity in stimulating insulin release from rat BRIN-BD11 beta cells, and acts without loss of integrity of the plasma membrane. Shows a marked affinity for both neutral and anionic membranes models. Does not show antibacterial (E.coli and S.aureus). Does not show hemolytic activity against human erythrocytes. The sequence is that of Plasticin-L1 from Leptodactylus laticeps (Santa Fe frog).